The chain runs to 342 residues: Phosphate acyltransferase (342 aa).

This sequence belongs to the PlsX family. Homodimer. Probably interacts with PlsY.

Its subcellular location is the cytoplasm. The catalysed reaction is a fatty acyl-[ACP] + phosphate = an acyl phosphate + holo-[ACP]. Its pathway is lipid metabolism; phospholipid metabolism. Catalyzes the reversible formation of acyl-phosphate (acyl-PO(4)) from acyl-[acyl-carrier-protein] (acyl-ACP). This enzyme utilizes acyl-ACP as fatty acyl donor, but not acyl-CoA. The chain is Phosphate acyltransferase from Trichormus variabilis (strain ATCC 29413 / PCC 7937) (Anabaena variabilis).